A 711-amino-acid chain; its full sequence is Ribosomal RNA large subunit methyltransferase K/L (711 aa).

A THUMP domain is found at 43–154 (LAYRITLWSR…RGQITLGINF (112 aa)).

Belongs to the methyltransferase superfamily. RlmKL family.

It localises to the cytoplasm. The catalysed reaction is guanosine(2445) in 23S rRNA + S-adenosyl-L-methionine = N(2)-methylguanosine(2445) in 23S rRNA + S-adenosyl-L-homocysteine + H(+). The enzyme catalyses guanosine(2069) in 23S rRNA + S-adenosyl-L-methionine = N(2)-methylguanosine(2069) in 23S rRNA + S-adenosyl-L-homocysteine + H(+). Specifically methylates the guanine in position 2445 (m2G2445) and the guanine in position 2069 (m7G2069) of 23S rRNA. The protein is Ribosomal RNA large subunit methyltransferase K/L of Shewanella loihica (strain ATCC BAA-1088 / PV-4).